We begin with the raw amino-acid sequence, 229 residues long: Uracil-DNA glycosylase (229 aa).

The active-site Proton acceptor is D71.

The protein belongs to the uracil-DNA glycosylase (UDG) superfamily. UNG family.

Its subcellular location is the cytoplasm. It carries out the reaction Hydrolyzes single-stranded DNA or mismatched double-stranded DNA and polynucleotides, releasing free uracil.. Functionally, excises uracil residues from the DNA which can arise as a result of misincorporation of dUMP residues by DNA polymerase or due to deamination of cytosine. The polypeptide is Uracil-DNA glycosylase (Campylobacter lari (strain RM2100 / D67 / ATCC BAA-1060)).